Reading from the N-terminus, the 264-residue chain is Thiazole synthase (264 aa).

Catalysis depends on Lys-98, which acts as the Schiff-base intermediate with DXP. 1-deoxy-D-xylulose 5-phosphate contacts are provided by residues Gly-159, 185–186, and 207–208; these read AG and AS.

It belongs to the ThiG family. Homotetramer. Forms heterodimers with either ThiH or ThiS.

The protein localises to the cytoplasm. The catalysed reaction is [ThiS sulfur-carrier protein]-C-terminal-Gly-aminoethanethioate + 2-iminoacetate + 1-deoxy-D-xylulose 5-phosphate = [ThiS sulfur-carrier protein]-C-terminal Gly-Gly + 2-[(2R,5Z)-2-carboxy-4-methylthiazol-5(2H)-ylidene]ethyl phosphate + 2 H2O + H(+). It functions in the pathway cofactor biosynthesis; thiamine diphosphate biosynthesis. Functionally, catalyzes the rearrangement of 1-deoxy-D-xylulose 5-phosphate (DXP) to produce the thiazole phosphate moiety of thiamine. Sulfur is provided by the thiocarboxylate moiety of the carrier protein ThiS. In vitro, sulfur can be provided by H(2)S. The sequence is that of Thiazole synthase from Streptomyces griseus subsp. griseus (strain JCM 4626 / CBS 651.72 / NBRC 13350 / KCC S-0626 / ISP 5235).